The chain runs to 472 residues: Velvet complex subunit umv2 (472 aa).

Basic and acidic residues-rich tracts occupy residues 1–10, 29–59, 67–80, and 89–105; these read MSRSDTDGRD, SQRR…DSHG, YSRD…HRGD, and SYQR…EQER. 3 disordered regions span residues 1-121, 281-327, and 433-472; these read MSRS…PLEA, CDDG…QFGG, and SQGI…EDDE. Residues 106–116 show a composition bias toward low complexity; it reads SYGGASASRSS. Residues 158-441 form the Velvet domain; it reads ENGRRYRLVV…ASQGIKIPVR (284 aa). A compositionally biased stretch (polar residues) spans 286 to 298; sequence RSSTHPQHASEST. Over residues 456 to 466 the composition is skewed to gly residues; that stretch reads DGMGDYDGASG.

The protein belongs to the velvet family. VelB subfamily. Component of the heterotrimeric velvet complex composed of laeA, veA and velB; VeA acting as a bridging protein between laeA and velB. Forms a heterodimeric complex with vosA; the formation of the velB-vosA complex is light-dependent.

It localises to the nucleus. The protein localises to the cytoplasm. Its function is as follows. Component of the velvet transcription factor complex that controls sexual/asexual developmental ratio in response to light, promoting sexual development in the darkness while stimulating asexual sporulation under illumination. The velvet complex acts as a global regulator for secondary metabolite gene expression. Component of the velB-VosA heterodimeric complex that plays a dual role in activating genes associated with spore maturation and repressing certain development-associated genes. The velB-VosA complex binds DNA through the DNA-binding domain of vosA that recognizes an 11-nucleotide consensus sequence 5'-CTGGCCGCGGC-3' consisting of two motifs in the promoters of key developmental regulatory genes. Required for full virulence on seedlings. The sequence is that of Velvet complex subunit umv2 from Mycosarcoma maydis (Corn smut fungus).